The sequence spans 3133 residues: Cysteine repeat modular protein A (3133 aa).

The segment at 1-39 is disordered; the sequence is MDSASTSMSRVHPSGVYRRPLLPSGGPRSTSERDERVDL. Positions 30–39 are enriched in basic and acidic residues; that stretch reads TSERDERVDL. The chain crosses the membrane as a helical span at residues 123–143; it reads LFLLFSSSPLLLLLLLHQFFI. Composition is skewed to basic and acidic residues over residues 173–211 and 301–311; these read TFEE…DGKE and NESEKAERARL. Disordered stretches follow at residues 173–234 and 294–317; these read TFEE…EGRR and VSPS…STPA. 3 N-linked (GlcNAc...) asparagine glycosylation sites follow: asparagine 301, asparagine 392, and asparagine 470. Positions 577 to 644 constitute a Kringle domain; sequence DETLEQGKLY…DPHVRFDFCD (68 aa). 2 disulfide bridges follow: cysteine 599-cysteine 631 and cysteine 620-cysteine 643. N-linked (GlcNAc...) asparagine glycosylation is found at asparagine 1364 and asparagine 1532. 3 helical membrane passes run 2229-2249, 2276-2296, and 2339-2359; these read MVWN…FNIV, LTGI…PSWI, and VFYA…MSII. N-linked (GlcNAc...) asparagine glycosylation is present at asparagine 2369. 3 helical membrane-spanning segments follow: residues 2420-2440, 2489-2509, and 2539-2559; these read AAKF…FVYS, VGIT…FLVL, and WEMV…VALI. N-linked (GlcNAc...) asparagine glycosylation occurs at asparagine 2565. The chain crosses the membrane as a helical span at residues 2569–2589; that stretch reads VWLAVVIAVIFLIIHLVTQPF. The N-linked (GlcNAc...) asparagine glycan is linked to asparagine 2602. 2 helical membrane-spanning segments follow: residues 2607 to 2627 and 2632 to 2652; these read IWTI…SGSV and LLFV…SLMF. Basic and acidic residues-rich tracts occupy residues 2827–2838 and 3049–3069; these read FAAKDETPTAEE and QEEN…DREI. Disordered stretches follow at residues 2827–2847 and 3049–3101; these read FAAK…DERL and QEEN…LPEG. The stretch at 2955 to 3068 forms a coiled coil; the sequence is SEALQKRNRK…KEEREEADRE (114 aa). The segment covering 3083–3094 has biased composition (acidic residues); the sequence is GEDDTATIDDSS.

Component of a complex, at least composed of cysteine repeat modular protein A (CRMPa), cysteine repeat modular protein B (CRMPb), micronemal protein 15 (MIC15) and thrombospondin type 1 domain-containing protein (TSP1).

It localises to the cell membrane. The protein resides in the endoplasmic reticulum. It is found in the golgi apparatus. Required for triggering rhoptry secretion. Plays a role in host cell invasion. This Toxoplasma gondii protein is Cysteine repeat modular protein A.